The chain runs to 1071 residues: MADSTLHQPAYPVRFVTSAALFDGHDAAINIMRRILQSQGAEVIHLGHNRAVHEVVAAAVEEDVQGVAVSSYQGGHVEYFEYLASALRDAGAGHVRVFGGGGGVIVPEEIERLARSGVRIFSPEDGQRLGLPGMINELIQTCDVDLTGERPAVEAVLAGERTALARVITCLQQDALPAADRDALLAAARDRTVPVLGITGTGGSGKSSLTDELVRRLRTDQQDKLRVAILAVDPTRRRGGGALLGDRIRMNSLDGTHVFFRSLATRGGHELPHDIDAVIAACKAAGYDLVILETPGIGQGDAAIVDHVDVAMYVMTPEFGAASQLEKIDMLDFADVVAINKFERRGGADAVRDVSRQLLRNREAFGADPADMPVFGTSAATFNDDGVTALYQHLLELLGARGLPVDEGVLPRVQTRVSTRFAQIIPTARVRYLAEIADTVRTYHARTRDQVAAAQRVQRLELVAAELPGDAAVADLLARARAELDPENAALLARWPEVAESYRGPEQVVRVRDREIRTTLRRESLSGSSIPRVALPRFTDHGELLRFLRSENLPGHFPFTAGVFPFKRDNEDPARMFAGEGDPFRTNRRFKVLSEHSEAKRLSTAFDSVTLYGRDPDERPDIYGKVGTSGVSIATVDDMKALYDGFDLTAPTTSVSMTINGPAPTILAFFLNTAIDQALDRFRAAEGREPTADEAADLRARTLATVRGTVQADILKEDQGQNTCIFSTEFSLRMMADIQEWFVRNKVRNFYSVSISGYHIAEAGANPISQLAFTLANGFTYVEAYLARGMHIDDFAPNLSFFFSNGMDPEYSVIGRVARRIWAIALRDKYGAAERSQKLKYHVQTSGRSLHAQEMNFNDIRTTLQALIAIYDNCNSLHTNAYDEAVTTPTEDSVRRALAIQLIINREWGLAMNENPLQGSFIIDELTDLAEEAVLTEFERISERGGVLGAMETGYQRGKIQDESMLYEHRKHDGSLPIIGVNTFRNPHGEPERTLELARATEREKQSQLDRVREFQRRHRTQAQAALARLEEVARTDENIFEVLMDAARVCSLQQVTETFFTVGGQYRRNV.

The 138-residue stretch at 12–149 (PVRFVTSAAL…QTCDVDLTGE (138 aa)) folds into the B12-binding domain. His25 lines the adenosylcob(III)alamin pocket. The tract at residues 153-400 (VEAVLAGERT…YQHLLELLGA (248 aa)) is GTPase chaperone MeaI. Position 203 to 208 (203 to 208 (GSGKSS)) interacts with GTP. Mg(2+) contacts are provided by Ser207, Val232, Asp233, and Asp246. Arg249 lines the GTP pocket. Residues Glu293 and Thr294 each coordinate Mg(2+). Position 340-343 (340-343 (NKFE)) interacts with GTP. Residues 401 to 558 (RGLPVDEGVL…RSENLPGHFP (158 aa)) are linker. Substrate contacts are provided by Phe566, Arg601, Arg707, Tyr751, Ser800, Arg835, and Lys840. GTP-binding residues include Glu952 and Asn1070.

It belongs to the IcmF family. Homodimer. Adenosylcob(III)alamin serves as cofactor. Mg(2+) is required as a cofactor.

The catalysed reaction is 2-methylpropanoyl-CoA = butanoyl-CoA. The enzyme catalyses GTP + H2O = GDP + phosphate + H(+). Its function is as follows. Catalyzes the reversible interconversion of isobutyryl-CoA and n-butyryl-CoA, using radical chemistry. Also exhibits GTPase activity, associated with its G-protein domain (MeaI) that functions as a chaperone that assists cofactor delivery and proper holo-enzyme assembly. Does not exhibit methylmalonyl-CoA mutase (MCM) activity. In Nocardia farcinica (strain IFM 10152), this protein is Fused isobutyryl-CoA mutase.